A 347-amino-acid chain; its full sequence is GMP reductase (347 aa).

108 to 131 (DDFTKTRQILAMSTALRFICVDVA) lines the NADP(+) pocket. Gly-181 and Gly-183 together coordinate K(+). Cys-186 serves as the catalytic Thioimidate intermediate. Residue 216–239 (IVGDGGCTCPGDVAKAFGGGADFV) coordinates NADP(+).

It belongs to the IMPDH/GMPR family. GuaC type 1 subfamily. Homotetramer.

It catalyses the reaction IMP + NH4(+) + NADP(+) = GMP + NADPH + 2 H(+). Catalyzes the irreversible NADPH-dependent deamination of GMP to IMP. It functions in the conversion of nucleobase, nucleoside and nucleotide derivatives of G to A nucleotides, and in maintaining the intracellular balance of A and G nucleotides. The sequence is that of GMP reductase from Aeromonas salmonicida (strain A449).